The following is a 116-amino-acid chain: uncharacterized protein (116 aa).

Over 1-46 (MGDNTTVAPGTNQTLVEEDLGAQITHTLMVQIMSKLNEMLTEYQPQ) the chain is Extracellular. N-linked (GlcNAc...) asparagine; by host glycans are attached at residues N4 and N12. Residues 47–67 (IIGIGATVLAIFVIMFISLLI) form a helical membrane-spanning segment. At 68–116 (ILGCNCIRPYNFKNLKRYITGKASKSVEYQPLKMSAVNMGMDEDDEFLA) the chain is on the cytoplasmic side.

It localises to the host membrane. This is an uncharacterized protein from Magallana gigas (Pacific oyster).